A 449-amino-acid polypeptide reads, in one-letter code: NADH-quinone oxidoreductase subunit H (449 aa).

9 helical membrane passes run 23–43 (WWVI…LTLF), 93–113 (AVYL…FSVI), 137–157 (VAVL…VLGG), 176–196 (MISY…YAGS), 209–229 (LWYG…MVGE), 258–280 (ALFF…TLFL), 300–320 (YWPL…FIWL), 332–352 (FMAF…VAVA), and 368–388 (LLIG…IGGA). The segment covering 427–442 (RSSPIASSMPQPSAAT) has biased composition (polar residues). A disordered region spans residues 427 to 449 (RSSPIASSMPQPSAATRSAGEEI).

It belongs to the complex I subunit 1 family. As to quaternary structure, NDH-1 is composed of 14 different subunits. Subunits NuoA, H, J, K, L, M, N constitute the membrane sector of the complex.

It is found in the cell membrane. It carries out the reaction a quinone + NADH + 5 H(+)(in) = a quinol + NAD(+) + 4 H(+)(out). NDH-1 shuttles electrons from NADH, via FMN and iron-sulfur (Fe-S) centers, to quinones in the respiratory chain. The immediate electron acceptor for the enzyme in this species is believed to be ubiquinone. Couples the redox reaction to proton translocation (for every two electrons transferred, four hydrogen ions are translocated across the cytoplasmic membrane), and thus conserves the redox energy in a proton gradient. This subunit may bind ubiquinone. This chain is NADH-quinone oxidoreductase subunit H, found in Nocardioides sp. (strain ATCC BAA-499 / JS614).